An 89-amino-acid chain; its full sequence is MELSPELLRKLETLAKIRLSPEEEALLLQDLKRILDFVDALPRVEEGGAEEALGRLREDEPRPSLPQAEALALAPEAEDGFFRVPPVLE.

Belongs to the GatC family. Heterotrimer of A, B and C subunits.

It carries out the reaction L-glutamyl-tRNA(Gln) + L-glutamine + ATP + H2O = L-glutaminyl-tRNA(Gln) + L-glutamate + ADP + phosphate + H(+). The catalysed reaction is L-aspartyl-tRNA(Asn) + L-glutamine + ATP + H2O = L-asparaginyl-tRNA(Asn) + L-glutamate + ADP + phosphate + 2 H(+). Allows the formation of correctly charged Asn-tRNA(Asn) or Gln-tRNA(Gln) through the transamidation of misacylated Asp-tRNA(Asn) or Glu-tRNA(Gln) in organisms which lack either or both of asparaginyl-tRNA or glutaminyl-tRNA synthetases. The reaction takes place in the presence of glutamine and ATP through an activated phospho-Asp-tRNA(Asn) or phospho-Glu-tRNA(Gln). In Thermus thermophilus (strain ATCC 27634 / DSM 579 / HB8), this protein is Glutamyl-tRNA(Gln) amidotransferase subunit C.